We begin with the raw amino-acid sequence, 93 residues long: uncharacterized protein (93 aa).

It to E.coli YdbD C-terminal region.

This is an uncharacterized protein from Escherichia coli (strain K12).